A 185-amino-acid polypeptide reads, in one-letter code: Large ribosomal subunit protein uL5 (185 aa).

It belongs to the universal ribosomal protein uL5 family. Part of the 50S ribosomal subunit; part of the 5S rRNA/L5/L18/L25 subcomplex. Contacts the 5S rRNA and the P site tRNA. Forms a bridge to the 30S subunit in the 70S ribosome.

This is one of the proteins that bind and probably mediate the attachment of the 5S RNA into the large ribosomal subunit, where it forms part of the central protuberance. In the 70S ribosome it contacts protein S13 of the 30S subunit (bridge B1b), connecting the 2 subunits; this bridge is implicated in subunit movement. Contacts the P site tRNA; the 5S rRNA and some of its associated proteins might help stabilize positioning of ribosome-bound tRNAs. The polypeptide is Large ribosomal subunit protein uL5 (Afipia carboxidovorans (strain ATCC 49405 / DSM 1227 / KCTC 32145 / OM5) (Oligotropha carboxidovorans)).